Consider the following 657-residue polypeptide: MTIITIISGMYIYSLLSQDAHHSQYGQNTNLVLKKPIPKPQTAAFNQESTMASTTLLPSTSTQFLDRTFSTSSSSSRPKLQSLSFSSTLRNKKLVVPCYVSSSVNKKSSVSSSLQSPTFKPPSWKKLCNDVTNLIPKTTNQNPKLNPVQRTAAMVLDAVENAMISHERRRHPHPKTADPAVQIAGNFFPVPEKPVVHNLPVTGTVPECIQGVYVRNGANPLHKPVSGHHLFDGDGMVHAVRFDNGSVSYACRFTETNRLVQERECGRPVFPKAIGELHGHLGIAKLMLFNTRGLFGLVDPTGGLGVANAGLVYFNGHLLAMSEDDLPYHVKVTQTGDLETSGRYDFDGQLKSTMIAHPKIDPETRELFALSYDVVSKPYLKYFRFTSDGEKSPDVEIPLDQPTMIHDFAITENFVVIPDQQVVFRLPEMIRGGSPVVYDEKKKSRFGILNKNAKDASSIQWIEVPDCFCFHLWNSWEEPETDEVVVIGSCMTPPDSIFNEHDETLQSVLSEIRLNLKTGESTRRPVISEQVNLEAGMVNRNLLGRKTRYAYLALTEPWPKVSGFAKVDLSTGEIRKYIYGEGKYGGEPLFLPSGDGEEDGGYIMVFVHDEEKVKSELQLINAVNMKLEATVTLPSRVPYGFHGTFISKEDLSKQALC.

4 residues coordinate Fe cation: H357, H406, H471, and H642.

The protein belongs to the carotenoid oxygenase family. It depends on Fe(2+) as a cofactor. As to expression, expressed in developing siliques, embryo and endosperm.

It is found in the plastid. The protein localises to the chloroplast stroma. It carries out the reaction a 9-cis-epoxycarotenoid + O2 = a 12'-apo-carotenal + 2-cis,4-trans-xanthoxin. The enzyme catalyses 9-cis-violaxanthin + O2 = (3S,5R,6S)-5,6-epoxy-3-hydroxy-5,6-dihydro-12'-apo-beta-caroten-12'-al + 2-cis,4-trans-xanthoxin. It catalyses the reaction 9'-cis-neoxanthin + O2 = (3S,5R,6R)-3,5-dihydroxy-6,7-didehydro-5,6-dihydro-12'-apo-beta-caroten-12'-al + 2-cis,4-trans-xanthoxin. In terms of biological role, has a 11,12(11',12') 9-cis epoxycarotenoid cleavage activity. Catalyzes the first step of abscisic-acid biosynthesis from carotenoids. Contributes probably to abscisic acid synthesis for the induction of seed dormancy. The protein is 9-cis-epoxycarotenoid dioxygenase NCED9, chloroplastic (NCED9) of Arabidopsis thaliana (Mouse-ear cress).